The sequence spans 322 residues: Ferrochelatase (322 aa).

His-193 and Glu-274 together coordinate Fe cation.

This sequence belongs to the ferrochelatase family.

It localises to the cytoplasm. The catalysed reaction is heme b + 2 H(+) = protoporphyrin IX + Fe(2+). The protein operates within porphyrin-containing compound metabolism; protoheme biosynthesis; protoheme from protoporphyrin-IX: step 1/1. Functionally, catalyzes the ferrous insertion into protoporphyrin IX. In Aliivibrio fischeri (strain MJ11) (Vibrio fischeri), this protein is Ferrochelatase.